Here is an 833-residue protein sequence, read N- to C-terminus: Disintegrin and metalloproteinase domain-containing protein 17 (833 aa).

The signal sequence occupies residues 1-17 (MRQCALFLTSLVPIVLA). The region spanning 223-474 (NTCKLLVVAD…KAQECFQERS (252 aa)) is the Peptidase M12B domain. Positions 301–345 (AKSYPNEEKDAWDVKMLLEQFSFDIAEEASKVCLAHLFTYQDFDM) are interaction with classical swine fever virus envelope glycoprotein E2. Intrachain disulfides connect Cys-365–Cys-469, Cys-423–Cys-453, and Cys-534–Cys-555. Residue His-405 coordinates Zn(2+). The active site involves Glu-406. Zn(2+)-binding residues include His-409 and His-415. Residues 475 to 563 (NKVCGNSRVD…ECPPPGNAED (89 aa)) enclose the Disintegrin domain. The chain crosses the membrane as a helical span at residues 672 to 692 (IVGSVLVFSLMLWIPVSILVH). Disordered stretches follow at residues 735–760 (TPGRLQPLQPLQPGPVLPSAPSVPVA) and 772–833 (QEDP…ETEC). Basic and acidic residues-rich tracts occupy residues 777–790 (TDSHVDEDGFEKDP), 800–816 (SFEDLTDHPVTRSEKAS), and 824–833 (SRVDSKETEC).

(Microbial infection) Interacts (via metalloproteinase domain) with classical swine fever virus envelope glycoprotein E2; this interaction allows binding and probably entry of the virus into the cell. In terms of assembly, interacts with MAD2L1, MAPK14 and MUC1. Interacts with iRhom1/RHBDF1 and iRhom2/RHBDF2. Interacts with FRMD8 via its interaction with iRhom1/RHBDF1 and iRhom2/RHBDF2. It depends on Zn(2+) as a cofactor. The precursor is cleaved by a furin endopeptidase. Post-translationally, phosphorylated.

The protein resides in the membrane. The catalysed reaction is Narrow endopeptidase specificity. Cleaves Pro-Leu-Ala-Gln-Ala-|-Val-Arg-Ser-Ser-Ser in the membrane-bound, 26-kDa form of tumor necrosis factor alpha (TNFalpha). Similarly cleaves other membrane-anchored, cell-surface proteins to 'shed' the extracellular domains.. Functionally, transmembrane metalloprotease which mediates the ectodomain shedding of a myriad of transmembrane proteins including adhesion proteins, growth factor precursors and cytokines important for inflammation and immunity. Cleaves the membrane-bound precursor of TNF-alpha to its mature soluble form. Responsible for the proteolytical release of soluble JAM3 from endothelial cells surface. Responsible for the proteolytic release of several other cell-surface proteins, including p75 TNF-receptor, interleukin 1 receptor type II, p55 TNF-receptor, transforming growth factor-alpha, L-selectin, growth hormone receptor, MUC1 and the amyloid precursor protein. Acts as an activator of Notch pathway by mediating cleavage of Notch, generating the membrane-associated intermediate fragment called Notch extracellular truncation (NEXT). Plays a role in the proteolytic processing of ACE2. Plays a role in hemostasis through shedding of GP1BA, the platelet glycoprotein Ib alpha chain. Mediates the proteolytic cleavage of LAG3, leading to release the secreted form of LAG3. Mediates the proteolytic cleavage of IL6R, leading to the release of secreted form of IL6R. Mediates the proteolytic cleavage and shedding of FCGR3A upon NK cell stimulation, a mechanism that allows for increased NK cell motility and detachment from opsonized target cells. Cleaves TREM2, resulting in shedding of the TREM2 ectodomain. (Microbial infection) Acts as a receptor for classical swine fever virus. This Sus scrofa (Pig) protein is Disintegrin and metalloproteinase domain-containing protein 17 (ADAM17).